A 294-amino-acid polypeptide reads, in one-letter code: Nucleotide-binding protein Maqu_2718 (294 aa).

8–15 (GRSGSGKS) lines the ATP pocket. 61 to 64 (DARN) contributes to the GTP binding site.

It belongs to the RapZ-like family.

Its function is as follows. Displays ATPase and GTPase activities. This is Nucleotide-binding protein Maqu_2718 from Marinobacter nauticus (strain ATCC 700491 / DSM 11845 / VT8) (Marinobacter aquaeolei).